The primary structure comprises 294 residues: Nucleotide-binding protein lp_0779 (294 aa).

ATP is bound at residue 12–19; sequence GMSGAGKT. Residue 62–65 coordinates GTP; sequence DLRS.

It belongs to the RapZ-like family.

Functionally, displays ATPase and GTPase activities. The protein is Nucleotide-binding protein lp_0779 of Lactiplantibacillus plantarum (strain ATCC BAA-793 / NCIMB 8826 / WCFS1) (Lactobacillus plantarum).